A 167-amino-acid polypeptide reads, in one-letter code: Shikimate kinase (167 aa).

Position 8–15 (8–15 (GFMGSGKT)) interacts with ATP.

It belongs to the shikimate kinase family.

The protein localises to the cytoplasm. The catalysed reaction is shikimate + ATP = 3-phosphoshikimate + ADP + H(+). The protein operates within metabolic intermediate biosynthesis; chorismate biosynthesis; chorismate from D-erythrose 4-phosphate and phosphoenolpyruvate: step 5/7. This is Shikimate kinase from Helicobacter hepaticus (strain ATCC 51449 / 3B1).